We begin with the raw amino-acid sequence, 258 residues long: UPF0246 protein YaaA (258 aa).

This sequence belongs to the UPF0246 family.

The protein is UPF0246 protein YaaA of Escherichia coli O127:H6 (strain E2348/69 / EPEC).